Here is a 349-residue protein sequence, read N- to C-terminus: Phosphoribosylformylglycinamidine cyclo-ligase (349 aa).

This sequence belongs to the AIR synthase family.

The protein localises to the cytoplasm. It catalyses the reaction 2-formamido-N(1)-(5-O-phospho-beta-D-ribosyl)acetamidine + ATP = 5-amino-1-(5-phospho-beta-D-ribosyl)imidazole + ADP + phosphate + H(+). It functions in the pathway purine metabolism; IMP biosynthesis via de novo pathway; 5-amino-1-(5-phospho-D-ribosyl)imidazole from N(2)-formyl-N(1)-(5-phospho-D-ribosyl)glycinamide: step 2/2. The chain is Phosphoribosylformylglycinamidine cyclo-ligase from Methanococcus maripaludis (strain C6 / ATCC BAA-1332).